We begin with the raw amino-acid sequence, 427 residues long: ATP-dependent RNA helicase DDX39A (427 aa).

A compositionally biased stretch (acidic residues) spans 1–19 (MAEQDVENELLDYDEDEEP). The interval 1–36 (MAEQDVENELLDYDEDEEPQAPQESTPAPPKKDVKG) is disordered. N-acetylalanine is present on alanine 2. Lysine 31 is covalently cross-linked (Glycyl lysine isopeptide (Lys-Gly) (interchain with G-Cter in SUMO2)). Lysine 35 carries the N6-acetyllysine; alternate modification. Residue lysine 35 forms a Glycyl lysine isopeptide (Lys-Gly) (interchain with G-Cter in SUMO2); alternate linkage. Residue serine 37 is modified to Phosphoserine. A Q motif motif is present at residues 44–72 (SGFRDFLLKPELLRAIVDCGFEHPSEVQH). One can recognise a Helicase ATP-binding domain in the interval 75 to 248 (IPQAILGMDV…RKFMQDPMEV (174 aa)). 88–95 (AKSGMGKT) is a binding site for ATP. Residues lysine 154 and lysine 162 each participate in a glycyl lysine isopeptide (Lys-Gly) (interchain with G-Cter in SUMO2) cross-link. Threonine 171 is subject to Phosphothreonine. The short motif at 195 to 198 (DECD) is the DECD box element. Glycyl lysine isopeptide (Lys-Gly) (interchain with G-Cter in SUMO2) cross-links involve residues lysine 240 and lysine 255. Residues 260–421 (GLQQYYVKLK…ELPEEIDIST (162 aa)) form the Helicase C-terminal domain. Serine 426 is subject to Phosphoserine.

It belongs to the DEAD box helicase family. DECD subfamily. As to quaternary structure, binds ALYREF/THOC4 and DDX39B/BAT1. Interacts with the apo-AREX complex component SARNP. Interacts with MX1. Interacts with MCM3AP isoform GANP. Interacts with ECD. Interacts with PHAX; this interaction stimulates PHAX RNA binding activity. SUMOylated by RANBP2; SUMOylation modification affects its ability to bind RNA.

The protein resides in the nucleus. It localises to the cytoplasm. It catalyses the reaction ATP + H2O = ADP + phosphate + H(+). Its function is as follows. Helicase that plays an essential role in mRNA export and is involved in multiple steps in RNA metabolism including alternative splicing. Regulates nuclear mRNA export to the cytoplasm through association with ECD. Also involved in spliceosomal uridine-rich small nuclear RNA (U snRNA) export by stimulating the RNA binding of adapter PHAX. Plays a role in the negative regulation of type I IFN production by increasing the nuclear retention of antiviral transcripts and thus reducing their protein expression. Independently of the interferon pathway, plays an antiviral role against alphaviruses by binding to a 5' conserved sequence element in the viral genomic RNA. The sequence is that of ATP-dependent RNA helicase DDX39A from Mus musculus (Mouse).